The following is a 404-amino-acid chain: MKIVKAEVFVTCPGRNFVTLKITTEDGITGLGDATLNGRELSVASYLQDHLCPQLIGRDAHRIEDIWQFFYKGAYWRRGPVTMSAISAVDMALWDIKAKAANMPLYQLLGGASREGVMVYCHTTGHSIDEALDDYARHQELGFKAIRVQCGIPGMKTTYGMSKGKGLAYEPATKGQWPEEQLWSTEKYLDFMPKLFDAVRNKFGFNEHLLHDMHHRLTPIEAARFGKSIEDYRMFWMEDPTPAENQECFRLIRQHTVTPIAVGEVFNSIWDCKQLIEEQLIDYIRTTLTHAGGITGMRRIADFASLYQVRTGSHGPSDLSPVCMAAALHFDLWVPNFGVQEYMGYSEQMLEVFPHNWTFDNGYMHPGDKPGLGIEFDEKLAAKYPYEPAYLPVARLEDGTLWNW.

Belongs to the mandelate racemase/muconate lactonizing enzyme family.

Functionally, probably involved in the degradation of homoserine lactone (HSL) or of a metabolite of HSL that signals starvation. The chain is Starvation-sensing protein RspA from Escherichia coli (strain K12).